The primary structure comprises 333 residues: Protein farnesyltransferase/geranylgeranyltransferase type-1 subunit alpha (333 aa).

PFTA repeat units follow at residues 61–95, 96–130, 132–166, 167–200, and 207–241; these read LSSR…SLKV, DLHV…KLGP, ARNS…NLGG, WEDE…RSPV, and MRES…DEST.

It belongs to the protein prenyltransferase subunit alpha family. As to quaternary structure, heterodimer of FTA and FTB (farnesyltransferase). Heterodimer of an alpha and a beta subunit. Requires Mg(2+) as cofactor.

The catalysed reaction is L-cysteinyl-[protein] + (2E,6E)-farnesyl diphosphate = S-(2E,6E)-farnesyl-L-cysteinyl-[protein] + diphosphate. The enzyme catalyses geranylgeranyl diphosphate + L-cysteinyl-[protein] = S-geranylgeranyl-L-cysteinyl-[protein] + diphosphate. Its function is as follows. Essential subunit of both the farnesyltransferase and the geranylgeranyltransferase complex. Contributes to the transfer of a farnesyl or geranylgeranyl moiety from farnesyl or geranylgeranyl diphosphate to a cysteine at the fourth position from the C-terminus of several proteins having the C-terminal sequence Cys-aliphatic-aliphatic-X. The protein is Protein farnesyltransferase/geranylgeranyltransferase type-1 subunit alpha (FTA) of Pisum sativum (Garden pea).